The following is a 181-amino-acid chain: Adenine phosphoribosyltransferase (181 aa).

The protein belongs to the purine/pyrimidine phosphoribosyltransferase family. Homodimer.

The protein localises to the cytoplasm. It carries out the reaction AMP + diphosphate = 5-phospho-alpha-D-ribose 1-diphosphate + adenine. The protein operates within purine metabolism; AMP biosynthesis via salvage pathway; AMP from adenine: step 1/1. Catalyzes a salvage reaction resulting in the formation of AMP, that is energically less costly than de novo synthesis. In Neorhizobium galegae (Rhizobium galegae), this protein is Adenine phosphoribosyltransferase.